Consider the following 134-residue polypeptide: Small ribosomal subunit protein uS8c (134 aa).

Belongs to the universal ribosomal protein uS8 family. In terms of assembly, part of the 30S ribosomal subunit.

It is found in the plastid. It localises to the chloroplast. In terms of biological role, one of the primary rRNA binding proteins, it binds directly to 16S rRNA central domain where it helps coordinate assembly of the platform of the 30S subunit. The polypeptide is Small ribosomal subunit protein uS8c (rps8) (Helianthus annuus (Common sunflower)).